Consider the following 129-residue polypeptide: Dormancy-associated protein 2 (129 aa).

An N-terminal signal peptide occupies residues 1 to 25 (MDSRKAMLILGLLAMVLLISSEVSA). Residues 110–129 (GGYHGGGGHGGHGGASNNGN) form a disordered region.

This sequence belongs to the DRM1/ARP family. In terms of tissue distribution, expressed in axilary buds. Detected in growing stems, leaflets and floral organs, but not in roots.

The protein is Dormancy-associated protein 2 of Pisum sativum (Garden pea).